The sequence spans 590 residues: G protein-coupled receptor kinase 5 (590 aa).

The interval 1–185 is N-terminal; the sequence is MELENIVANT…LERQPVTKNT (185 aa). The segment at 20–39 is interaction with calmodulin; the sequence is GGKRKGKSKKWKEILKFPHI. In terms of domain architecture, RGS spans 53-171; sequence YCSLCDKQPI…LDSMFFDRFL (119 aa). In terms of domain architecture, Protein kinase spans 186–448; the sequence is FRQYRVLGKG…AAEVKRHPFF (263 aa). Residues 192-200 and Lys-215 each bind ATP; that span reads LGKGGFGEV. Asp-311 acts as the Proton acceptor in catalysis. The Nuclear localization signal signature appears at 388–395; that stretch reads RKEKVKRE. Positions 449–514 constitute an AGC-kinase C-terminal domain; sequence RNMNFKRLEA…GSVSIPWQNE (66 aa). Ser-484 is subject to Phosphoserine; by autocatalysis. Phosphothreonine; by autocatalysis is present on Thr-485. The interval 531–590 is disordered; it reads GTLPPDLNRNHPPEPPKKGLLQRLFKRQHQNNSKSSPSSKTSFNHHINSNHVSSNSTGSS. Over residues 538–547 the composition is skewed to basic and acidic residues; the sequence is NRNHPPEPPK. The interval 546–565 is sufficient for membrane localization; sequence PKKGLLQRLFKRQHQNNSKS. The segment covering 563–590 has biased composition (low complexity); it reads SKSSPSSKTSFNHHINSNHVSSNSTGSS. A Phosphoserine modification is found at Ser-579.

The protein belongs to the protein kinase superfamily. AGC Ser/Thr protein kinase family. GPRK subfamily. In terms of assembly, interacts with ST13 (via the C-terminus 303-319 AA). Interacts with TP53/p53. Interacts with HTR4 (via C-terminus 330-346 AA); this interaction is promoted by 5-HT (serotonin). Interacts with HDAC5. Interacts with GIT1. In terms of processing, autophosphorylated. Autophosphorylation may play a critical role in the regulation of GRK5 kinase activity. As to expression, highest levels in heart, placenta, lung &gt; skeletal muscle &gt; brain, liver, pancreas &gt; kidney.

The protein localises to the cytoplasm. The protein resides in the nucleus. It is found in the cell membrane. It catalyses the reaction [G-protein-coupled receptor] + ATP = [G-protein-coupled receptor]-phosphate + ADP + H(+). Inhibited by calmodulin with an IC(50) of 50 nM. Calmodulin inhibits GRK5 association with receptor and phospholipid. Serine/threonine kinase that phosphorylates preferentially the activated forms of a variety of G-protein-coupled receptors (GPCRs). Such receptor phosphorylation initiates beta-arrestin-mediated receptor desensitization, internalization, and signaling events leading to their down-regulation. Phosphorylates a variety of GPCRs, including adrenergic receptors, muscarinic acetylcholine receptors (more specifically Gi-coupled M2/M4 subtypes), dopamine receptors and opioid receptors. In addition to GPCRs, also phosphorylates various substrates: Hsc70-interacting protein/ST13, TP53/p53, HDAC5, and arrestin-1/ARRB1. Phosphorylation of ARRB1 by GRK5 inhibits G-protein independent MAPK1/MAPK3 signaling downstream of 5HT4-receptors. Phosphorylation of HDAC5, a repressor of myocyte enhancer factor 2 (MEF2) leading to nuclear export of HDAC5 and allowing MEF2-mediated transcription. Phosphorylation of TP53/p53, a crucial tumor suppressor, inhibits TP53/p53-mediated apoptosis. Phosphorylation of ST13 regulates internalization of the chemokine receptor. Phosphorylates rhodopsin (RHO) (in vitro) and a non G-protein-coupled receptor, LRP6 during Wnt signaling (in vitro). The chain is G protein-coupled receptor kinase 5 (GRK5) from Homo sapiens (Human).